Consider the following 260-residue polypeptide: Ribonuclease HII (260 aa).

One can recognise an RNase H type-2 domain in the interval 73–260 (LHIAGIDEAG…APVQQQLDIV (188 aa)). 3 residues coordinate a divalent metal cation: Asp-79, Glu-80, and Asp-171.

The protein belongs to the RNase HII family. Requires Mn(2+) as cofactor. Mg(2+) is required as a cofactor.

The protein resides in the cytoplasm. It catalyses the reaction Endonucleolytic cleavage to 5'-phosphomonoester.. Functionally, endonuclease that specifically degrades the RNA of RNA-DNA hybrids. This is Ribonuclease HII from Desulfitobacterium hafniense (strain Y51).